Reading from the N-terminus, the 156-residue chain is MPRRRIVGQRKILPDPKFSSELLAKFINILMVSGKKSLSESIVYTALEILVQRSSKSHLDAFEAALNNVRPTVEVKSRRVGGSTYQVPIEVRPVRRNALAMRWIVEAARKRGDKSMALRLANELADAMEKKGSAVKKCEDVHRTAEANKAFAHYRW.

It belongs to the universal ribosomal protein uS7 family. In terms of assembly, part of the 30S ribosomal subunit. Contacts proteins S9 and S11.

Its function is as follows. One of the primary rRNA binding proteins, it binds directly to 16S rRNA where it nucleates assembly of the head domain of the 30S subunit. Is located at the subunit interface close to the decoding center, probably blocks exit of the E-site tRNA. The protein is Small ribosomal subunit protein uS7 of Hamiltonella defensa subsp. Acyrthosiphon pisum (strain 5AT).